The following is a 116-amino-acid chain: MIETAIYGKTVDDQSRCVHWHLPKDVIAIRFKCCDKYYACFECHQELSSHPLEKYDLLDDANKHLIICGVCRHEMTFAEYYDYNSNLICPNCRSPFNPGCKLHYHLYFQNPPPAMC.

The segment at 10–94 adopts a CHY-type; degenerate zinc-finger fold; that stretch reads TVDDQSRCVH…SNLICPNCRS (85 aa). Zn(2+) contacts are provided by C17, H19, C40, C43, C68, C71, C89, and C92.

In terms of assembly, interacts with the small Tim proteins TIM8, TIM9, TIM10, TIM12, and TIM13.

It is found in the mitochondrion intermembrane space. The protein localises to the mitochondrion membrane. Its function is as follows. Required for the assembly or recycling of the small Tim proteins in the mitochondrial intermembrane, thereby participating in the import and insertion of multi-pass transmembrane proteins into the mitochondrial inner membrane. Probably acts by facilitating the formation of disulfide bonds in small Tim proteins. This Saccharomyces cerevisiae (strain ATCC 204508 / S288c) (Baker's yeast) protein is Helper of Tim protein 13 (HOT13).